Consider the following 194-residue polypeptide: Homing endonuclease I-DmoI (194 aa).

The region spanning 14-147 is the DOD-type homing endonuclease domain; the sequence is LLGLIIGDGG…VSRWLNNLGV (134 aa). Residues aspartate 21 and glutamate 117 contribute to the active site.

A divalent metal cation serves as cofactor.

Its function is as follows. Endonuclease involved in intron homing. Recognizes DNA in the 23S rRNA gene intron (minimally 5'-CCGGGTAAGTTCCGG-3'), cutting after A-8 on the top and C-11 on the bottom strand. Has a slow turnover rate, cuts the coding strand with a slight preference over the non-coding strand. This Desulfurococcus mucosus (Desulfurococcus mobilis) protein is Homing endonuclease I-DmoI.